The primary structure comprises 843 residues: Pentatricopeptide repeat-containing protein At4g21880, mitochondrial (843 aa).

PPR repeat units lie at residues 392–426 (SSTS…GLVI), 427–461 (SANI…SVKP), 462–496 (NSET…NLAP), 497–531 (NSSM…DVKP), 532–562 (DSVT…AGVE), 564–594 (NKHV…LEVP), and 598–632 (HNEL…RCPV).

Belongs to the PPR family. P subfamily.

The protein resides in the mitochondrion. The sequence is that of Pentatricopeptide repeat-containing protein At4g21880, mitochondrial from Arabidopsis thaliana (Mouse-ear cress).